The primary structure comprises 291 residues: Sulfotransferase 1A1 (291 aa).

3'-phosphoadenylyl sulfate is bound at residue 44-49 (KSGTNW). 102 to 104 (KTH) is a binding site for substrate. H104 acts as the Proton acceptor in catalysis. 3'-phosphoadenylyl sulfate contacts are provided by residues R126, S134, Y189, 223–228 (TSFKKM), and 251–255 (FMRKG). S134 is subject to Phosphoserine.

The protein belongs to the sulfotransferase 1 family. In terms of assembly, homodimer. In terms of tissue distribution, expressed in brain, colon, liver, and small intestine of mice colonized with B.ovatus and L.plantarum.

The protein resides in the cytoplasm. It catalyses the reaction a phenol + 3'-phosphoadenylyl sulfate = an aryl sulfate + adenosine 3',5'-bisphosphate + H(+). The catalysed reaction is 17beta-estradiol + 3'-phosphoadenylyl sulfate = 17beta-estradiol 3-sulfate + adenosine 3',5'-bisphosphate + H(+). The enzyme catalyses 4-ethylphenol + 3'-phosphoadenylyl sulfate = 4-ethylphenyl sulfate + adenosine 3',5'-bisphosphate + H(+). It carries out the reaction 4-nitrophenol + 3'-phosphoadenylyl sulfate = 4-nitrophenyl sulfate + adenosine 3',5'-bisphosphate. It catalyses the reaction dopamine + 3'-phosphoadenylyl sulfate = dopamine 3-O-sulfate + adenosine 3',5'-bisphosphate + H(+). The catalysed reaction is dopamine + 3'-phosphoadenylyl sulfate = dopamine 4-O-sulfate + adenosine 3',5'-bisphosphate + H(+). The enzyme catalyses 3,3',5-triiodo-L-thyronine + 3'-phosphoadenylyl sulfate = 3,3',5-triiodo-L-thyronine sulfate + adenosine 3',5'-bisphosphate + H(+). It carries out the reaction 3,3',5'-triiodo-L-thyronine + 3'-phosphoadenylyl sulfate = 3,3',5'-triiodo-L-thyronine sulfate + adenosine 3',5'-bisphosphate + H(+). It catalyses the reaction 3,3'-diiodo-L-thyronine + 3'-phosphoadenylyl sulfate = 3,3'-diiodo-L-thyronine sulfate + adenosine 3',5'-bisphosphate + H(+). The catalysed reaction is L-thyroxine + 3'-phosphoadenylyl sulfate = L-thyroxine sulfate + adenosine 3',5'-bisphosphate + H(+). Functionally, sulfotransferase that utilizes 3'-phospho-5'-adenylyl sulfate (PAPS) as sulfonate donor to catalyze the sulfate conjugation of a wide variety of acceptor molecules bearing a hydroxyl or an amine group. Sulfonation increases the water solubility of most compounds, and therefore their renal excretion, but it can also result in bioactivation to form active metabolites. Displays broad substrate specificity for small phenolic compounds. Plays an important role in the sulfonation of endogenous molecules such as steroid hormones. Mediates also the metabolic activation of carcinogenic N-hydroxyarylamines leading to highly reactive intermediates capable of forming DNA adducts, potentially resulting in mutagenesis. May play a role in gut microbiota-host metabolic interaction. O-sulfonates 4-ethylphenol (4-EP), a dietary tyrosine-derived metabolite produced by gut bacteria. The product 4-EPS crosses the blood-brain barrier and may negatively regulate oligodendrocyte maturation and myelination, affecting the functional connectivity of different brain regions associated with the limbic system. Catalyzes the sulfate conjugation of dopamine. Catalyzes the sulfation of T4 (L-thyroxine/3,5,3',5'-tetraiodothyronine), T3 (3,5,3'-triiodothyronine), rT3 (3,3',5'-triiodothyronine) and 3,3'-T2 (3,3'-diiodothyronine), with a substrate preference of 3,3'-T2 &gt; rT3 &gt; T3 &gt; T4. This is Sulfotransferase 1A1 (Sult1a1) from Mus musculus (Mouse).